A 351-amino-acid polypeptide reads, in one-letter code: Glycerol-3-phosphate dehydrogenase [NAD(P)+] (351 aa).

The NADPH site is built by S18, W19, R38, and K122. 3 residues coordinate sn-glycerol 3-phosphate: K122, G153, and S155. A157 contacts NADPH. Residues K208, D261, S271, R272, and N273 each coordinate sn-glycerol 3-phosphate. K208 (proton acceptor) is an active-site residue. R272 is a binding site for NADPH. E297 provides a ligand contact to NADPH.

This sequence belongs to the NAD-dependent glycerol-3-phosphate dehydrogenase family.

It localises to the cytoplasm. The enzyme catalyses sn-glycerol 3-phosphate + NAD(+) = dihydroxyacetone phosphate + NADH + H(+). The catalysed reaction is sn-glycerol 3-phosphate + NADP(+) = dihydroxyacetone phosphate + NADPH + H(+). Its pathway is membrane lipid metabolism; glycerophospholipid metabolism. Its function is as follows. Catalyzes the reduction of the glycolytic intermediate dihydroxyacetone phosphate (DHAP) to sn-glycerol 3-phosphate (G3P), the key precursor for phospholipid synthesis. This is Glycerol-3-phosphate dehydrogenase [NAD(P)+] from Bordetella bronchiseptica (strain ATCC BAA-588 / NCTC 13252 / RB50) (Alcaligenes bronchisepticus).